The sequence spans 248 residues: mRNA-decapping protein OPG122 (248 aa).

Positions 45–227 constitute a Nudix hydrolase domain; sequence HKRVSVSAIL…IAKYALDTAK (183 aa). Residues 126 to 147 carry the Nudix box motif; sequence GIPKRGENVPECLSREIKEEVN. Glu132 provides a ligand contact to Mg(2+). Catalysis depends on Glu141, which acts as the Nucleophile. Glu145 serves as a coordination point for Mn(2+). Asp167 serves as a coordination point for Mg(2+).

The protein belongs to the Nudix hydrolase family. Mg(2+) serves as cofactor. The cofactor is Mn(2+).

It localises to the host mitochondrion. Decapping enzyme that remove the protective 5'-cap from both host and viral mRNAs to commit transcripts for decay by the cellular exonuclease XRN1. Preferentially targets spliced mRNAs and since all viral genes are intronless, it preferentially targets host over viral transcripts. Acceleration of the turnover of cellular transcripts promotes the shutoff of host protein synthesis and therefore diminish the magnitude of antiviral response. This chain is mRNA-decapping protein OPG122 (OPG122), found in Bos taurus (Bovine).